We begin with the raw amino-acid sequence, 142 residues long: Large ribosomal subunit protein uL11 (142 aa).

This sequence belongs to the universal ribosomal protein uL11 family. As to quaternary structure, part of the ribosomal stalk of the 50S ribosomal subunit. Interacts with L10 and the large rRNA to form the base of the stalk. L10 forms an elongated spine to which L12 dimers bind in a sequential fashion forming a multimeric L10(L12)X complex. In terms of processing, one or more lysine residues are methylated.

Forms part of the ribosomal stalk which helps the ribosome interact with GTP-bound translation factors. The protein is Large ribosomal subunit protein uL11 of Shewanella piezotolerans (strain WP3 / JCM 13877).